The sequence spans 336 residues: Homoserine dehydrogenase (336 aa).

Residue Phe8 participates in NADPH binding. Ala10, Ile11, and Thr94 together coordinate NAD(+). The NADPH site is built by Ile11, Thr94, and Lys123. NADP(+) is bound by residues Ile11, Thr94, and Lys123. Glu147, Val150, and Gly152 together coordinate Na(+). NADP(+) contacts are provided by Gly205 and Glu208. The L-homoserine site is built by Glu208 and Asp219. Residue Lys223 is the Proton donor of the active site. Gly315 is an NADPH binding site. Residue Gly315 participates in NAD(+) binding. An NADP(+)-binding site is contributed by Gly315.

The protein belongs to the homoserine dehydrogenase family. The cofactor is a metal cation.

The enzyme catalyses L-homoserine + NADP(+) = L-aspartate 4-semialdehyde + NADPH + H(+). It catalyses the reaction L-homoserine + NAD(+) = L-aspartate 4-semialdehyde + NADH + H(+). Its pathway is amino-acid biosynthesis; L-methionine biosynthesis via de novo pathway; L-homoserine from L-aspartate: step 3/3. The protein operates within amino-acid biosynthesis; L-threonine biosynthesis; L-threonine from L-aspartate: step 3/5. Catalyzes the conversion of L-aspartate-beta-semialdehyde (L-Asa) to L-homoserine (L-Hse), the third step in the biosynthesis of threonine and methionine from aspartate. This is Homoserine dehydrogenase (hom) from Methanocaldococcus jannaschii (strain ATCC 43067 / DSM 2661 / JAL-1 / JCM 10045 / NBRC 100440) (Methanococcus jannaschii).